The following is a 338-amino-acid chain: Lipoate-protein ligase A (338 aa).

The 188-residue stretch at 29–216 (PATQRVLFLW…AFFAHYGERV (188 aa)) folds into the BPL/LPL catalytic domain. ATP contacts are provided by residues R71, 76–79 (GAVF), and K134. K134 lines the (R)-lipoate pocket.

Belongs to the LplA family. In terms of assembly, monomer.

It is found in the cytoplasm. The catalysed reaction is L-lysyl-[lipoyl-carrier protein] + (R)-lipoate + ATP = N(6)-[(R)-lipoyl]-L-lysyl-[lipoyl-carrier protein] + AMP + diphosphate + H(+). Its pathway is protein modification; protein lipoylation via exogenous pathway; protein N(6)-(lipoyl)lysine from lipoate: step 1/2. It functions in the pathway protein modification; protein lipoylation via exogenous pathway; protein N(6)-(lipoyl)lysine from lipoate: step 2/2. Its function is as follows. Catalyzes both the ATP-dependent activation of exogenously supplied lipoate to lipoyl-AMP and the transfer of the activated lipoyl onto the lipoyl domains of lipoate-dependent enzymes. The protein is Lipoate-protein ligase A of Shigella dysenteriae serotype 1 (strain Sd197).